The sequence spans 173 residues: Regulator of ribonuclease activity A (173 aa).

The protein belongs to the RraA family. Homotrimer. Binds to both RNA-binding sites in the C-terminal region of Rne and to RhlB.

The protein localises to the cytoplasm. Globally modulates RNA abundance by binding to RNase E (Rne) and regulating its endonucleolytic activity. Can modulate Rne action in a substrate-dependent manner by altering the composition of the degradosome. Modulates RNA-binding and helicase activities of the degradosome. In Vibrio vulnificus (strain YJ016), this protein is Regulator of ribonuclease activity A.